Reading from the N-terminus, the 463-residue chain is tRNA modification GTPase MnmE (463 aa).

Residues arginine 27, glutamate 92, and lysine 131 each contribute to the (6S)-5-formyl-5,6,7,8-tetrahydrofolate site. Positions 234–386 (GIKLAIVGKP…LEDHLLKIYS (153 aa)) constitute a TrmE-type G domain. Asparagine 244 contributes to the K(+) binding site. GTP-binding positions include 244 to 249 (NVGKSS), 263 to 269 (TNVAGTT), and 288 to 291 (DTAG). Serine 248 contributes to the Mg(2+) binding site. Residues threonine 263, valine 265, and threonine 268 each contribute to the K(+) site. Position 269 (threonine 269) interacts with Mg(2+). Lysine 463 contacts (6S)-5-formyl-5,6,7,8-tetrahydrofolate.

Belongs to the TRAFAC class TrmE-Era-EngA-EngB-Septin-like GTPase superfamily. TrmE GTPase family. As to quaternary structure, homodimer. Heterotetramer of two MnmE and two MnmG subunits. K(+) is required as a cofactor.

It localises to the cytoplasm. In terms of biological role, exhibits a very high intrinsic GTPase hydrolysis rate. Involved in the addition of a carboxymethylaminomethyl (cmnm) group at the wobble position (U34) of certain tRNAs, forming tRNA-cmnm(5)s(2)U34. The chain is tRNA modification GTPase MnmE from Mycoplasmopsis synoviae (strain 53) (Mycoplasma synoviae).